A 209-amino-acid chain; its full sequence is MAEKLGILGRKVGMTRIFASDGSAVAVTVIQAGPCPVIQVRNGETDGYDAVQIAFEEAKEKHVTKPARGHFAKAGKGLFRNLREIRLEAPAEFEVGQELTVSLFAAGEKVKVTGTSIGKGYQGVMRRWNFAGSKDTHGCEKVHRSGGSIGNNTFPGHVFKGKKMAGHWGDERVTVKNLEIVDIRAEDNVILVKGAVPGPKNGLVLVRKQ.

This sequence belongs to the universal ribosomal protein uL3 family. In terms of assembly, part of the 50S ribosomal subunit. Forms a cluster with proteins L14 and L19.

One of the primary rRNA binding proteins, it binds directly near the 3'-end of the 23S rRNA, where it nucleates assembly of the 50S subunit. The sequence is that of Large ribosomal subunit protein uL3 from Nitratidesulfovibrio vulgaris (strain DSM 19637 / Miyazaki F) (Desulfovibrio vulgaris).